The primary structure comprises 638 residues: Zinc finger and BTB domain-containing protein 22 (638 aa).

Residues 57 to 121 form the BTB domain; the sequence is CDVSIRVQGR…AYTGRLSMAA (65 aa). Disordered stretches follow at residues 171–223, 229–248, 335–354, and 367–451; these read CASV…STSQ, SAAG…APVV, DDED…GEPE, and EPAD…HGAV. Residues 189–210 show a composition bias toward polar residues; the sequence is SVRSHTSSRASENQSPSSSNYF. Ser-203 bears the Phosphoserine mark. The segment at 483-504 adopts a C2H2-type 1; atypical zinc-finger fold; sequence FLCHCGKAFSHKSMRDRHVNMH. C2H2-type zinc fingers lie at residues 510-532 and 538-559; these read FDCP…MKTH and YECS…HRGH. The segment at 564 to 638 is disordered; sequence HRMGVGGVGS…DFSGGGGAAH (75 aa).

Belongs to the krueppel C2H2-type zinc-finger protein family.

Its subcellular location is the nucleus. Functionally, may be involved in transcriptional regulation. The chain is Zinc finger and BTB domain-containing protein 22 (Zbtb22) from Mus musculus (Mouse).